Reading from the N-terminus, the 434-residue chain is Histidinol dehydrogenase (434 aa).

Tyrosine 130, glutamine 188, and asparagine 211 together coordinate NAD(+). Substrate is bound by residues serine 237, glutamine 259, and histidine 262. Glutamine 259 and histidine 262 together coordinate Zn(2+). Residues glutamate 326 and histidine 327 each act as proton acceptor in the active site. Substrate contacts are provided by histidine 327, aspartate 360, glutamate 414, and histidine 419. Aspartate 360 is a binding site for Zn(2+). Residue histidine 419 coordinates Zn(2+).

It belongs to the histidinol dehydrogenase family. Homodimer. Zn(2+) is required as a cofactor.

It carries out the reaction L-histidinol + 2 NAD(+) + H2O = L-histidine + 2 NADH + 3 H(+). Its pathway is amino-acid biosynthesis; L-histidine biosynthesis; L-histidine from 5-phospho-alpha-D-ribose 1-diphosphate: step 9/9. Functionally, catalyzes the sequential NAD-dependent oxidations of L-histidinol to L-histidinaldehyde and then to L-histidine. In Escherichia coli (strain K12), this protein is Histidinol dehydrogenase.